Reading from the N-terminus, the 82-residue chain is Small ribosomal subunit protein bS16 (82 aa).

This sequence belongs to the bacterial ribosomal protein bS16 family.

The protein is Small ribosomal subunit protein bS16 of Histophilus somni (strain 2336) (Haemophilus somnus).